An 847-amino-acid polypeptide reads, in one-letter code: Histidine decarboxylase (847 aa).

Residues Phe-80 and His-193 each coordinate substrate. Position 304 is an N6-(pyridoxal phosphate)lysine (Lys-304). A compositionally biased stretch (polar residues) spans Gly-575 to Gln-605. Disordered regions lie at residues Gly-575–Pro-662, Gln-769–Leu-798, and Ser-813–Leu-847. Residues Glu-606 to Glu-616 are compositionally biased toward acidic residues. Low complexity-rich tracts occupy residues Ser-634 to Ser-657 and Gln-769 to Gly-787. A compositionally biased stretch (polar residues) spans Asp-832–Leu-847.

Belongs to the group II decarboxylase family. In terms of assembly, homodimer. Requires pyridoxal 5'-phosphate as cofactor. In terms of tissue distribution, localized primarily to the photoreceptors, in the eye.

The catalysed reaction is L-histidine + H(+) = histamine + CO2. Functionally, required in photoreceptor transmitter synthesis. Catlayzes the conversion of L-histidine to histamine. The protein is Histidine decarboxylase (Hdc) of Drosophila melanogaster (Fruit fly).